The sequence spans 471 residues: UDP-N-acetylmuramate--L-alanine ligase (471 aa).

An ATP-binding site is contributed by 114-120; sequence GTHGKTT.

The protein belongs to the MurCDEF family.

The protein localises to the cytoplasm. It catalyses the reaction UDP-N-acetyl-alpha-D-muramate + L-alanine + ATP = UDP-N-acetyl-alpha-D-muramoyl-L-alanine + ADP + phosphate + H(+). It functions in the pathway cell wall biogenesis; peptidoglycan biosynthesis. Cell wall formation. The protein is UDP-N-acetylmuramate--L-alanine ligase of Allorhizobium ampelinum (strain ATCC BAA-846 / DSM 112012 / S4) (Agrobacterium vitis (strain S4)).